The sequence spans 253 residues: Large ribosomal subunit protein uL4 (253 aa).

The tract at residues 78 to 107 (SRAARVPHAKGGRRAHPPKPEADRSEKVNT) is disordered. The span at 82-94 (RVPHAKGGRRAHP) shows a compositional bias: basic residues. Basic and acidic residues predominate over residues 95–107 (PKPEADRSEKVNT).

Belongs to the universal ribosomal protein uL4 family. As to quaternary structure, part of the 50S ribosomal subunit.

Its function is as follows. One of the primary rRNA binding proteins, this protein initially binds near the 5'-end of the 23S rRNA. It is important during the early stages of 50S assembly. It makes multiple contacts with different domains of the 23S rRNA in the assembled 50S subunit and ribosome. Functionally, forms part of the polypeptide exit tunnel. This is Large ribosomal subunit protein uL4 from Methanosarcina acetivorans (strain ATCC 35395 / DSM 2834 / JCM 12185 / C2A).